Consider the following 336-residue polypeptide: MLPFLPEPSLSYTQQNRTAVLLLNLGTPDAPTAQAVRPYLKSFLTDRRVVELPKWLWYPILHGLVLTLRPKKSAHAYEKIWFKEGSPLEVYTARQAAALAKRMPDLIVRHAMTYGNPSVADVLSELKAQGAGRLLVIPMYPQYAASSSGAAVDKVCEQLLLQRNQMSVRTVSRFYDDTGYIDAMKNHILRYWAEHGRGKKLMLSFHGVPQKHYDLGDPYPDECRHTAKLLAEALELTEDQYVVSFQSQFGRAKWVTPSTQDLFGKLPKQGVTELDVFCPGFLADCLETMEEIALMGREQFYEAGGKSYRYIPCLNDNPDWIDALVALAEENLGGWR.

Residues His206 and Glu287 each coordinate Fe cation.

This sequence belongs to the ferrochelatase family.

It is found in the cytoplasm. The catalysed reaction is heme b + 2 H(+) = protoporphyrin IX + Fe(2+). It functions in the pathway porphyrin-containing compound metabolism; protoheme biosynthesis; protoheme from protoporphyrin-IX: step 1/1. Its function is as follows. Catalyzes the ferrous insertion into protoporphyrin IX. This Neisseria meningitidis serogroup A / serotype 4A (strain DSM 15465 / Z2491) protein is Ferrochelatase.